The chain runs to 179 residues: Adenine phosphoribosyltransferase (179 aa).

It belongs to the purine/pyrimidine phosphoribosyltransferase family. Homodimer.

The protein resides in the cytoplasm. It catalyses the reaction AMP + diphosphate = 5-phospho-alpha-D-ribose 1-diphosphate + adenine. It participates in purine metabolism; AMP biosynthesis via salvage pathway; AMP from adenine: step 1/1. Its function is as follows. Catalyzes a salvage reaction resulting in the formation of AMP, that is energically less costly than de novo synthesis. The polypeptide is Adenine phosphoribosyltransferase (Gluconobacter oxydans (strain 621H) (Gluconobacter suboxydans)).